The sequence spans 1005 residues: MAKETTARSILGYQTLPTTALIALIYVVAFFSVLVSDQLPSIPHPGSKKLKGFDLDLARRDLEHIAARPHPYNSHANDAVREYLLNRLDDIAWGKDHVHLDNDLRSNGSWASPKYGVYFEGTNLLVKIDGTDDDPHTQIPRGVADGVLFSAHYDSVSTAAGATDDGMGVVTLLQLIQYFAENRQRKTAIFNINNGEEDWLNGAHAFLQHPWANLTSTFLNLEGAASGGRPILFRSTSLKPVKAYDDVPHKLRVRHPHANVIFSDAFARGFVRSGTDYSVYTGIDRHGPAAEGGLLREGLDIAFYKGRSRYHTRWDAPAYTEGGERSLWSMIDVARGVGVGLLNPEDSAKQKSKPGVYFDRPVVLALLWAIGAVLKHNAGSPPPPPKPTVPHSANNASAGTGRPGASTRQPTRSFGSNEDANSERGILARIKSVSVKNVLITVWKQASFWIALIVTVGLQALLAWGYVAINPFTIYSRPYFVLLSFFALSFFSMTLVLQAAFPSSPVKHAIEVREQEKTTILLHLHLLSWIALLLSTILIGKSQVGSFYVVTVWYLGIWAATVIGTLQPILVSKRADDKGKRRARRSRSASTSSSSSSSSSSSSGSDTETERPSTQPASERTPLLFGRANGASNRRKTNSKSKEDGAIGWWIAQVLLTVPPVVMLVGQITSIVLEAMNQTLTDGNSAWSIYLLTALLATMLVLPVAPFSPKLHRGLIFLSAAVFVGFTIYLWVVFPFTRQDPFKVFFQQTVSLDREDVFPMNATGNAVTTHGPKIVTELTGNPAYLRRVLPYLPSSREEDITCSPHEVRTGLETCRWKSNRLAPFPGGKDPWSTWDSDAQRTTTDVSFFKADVTRTAWASARFIVQGRNTRNCRLYFDPPEKSGVRVVRYVVHGGAKGMQPGYPVDLVNGVQEIRLWSRTWGKAWEVDVDWETPLGTGEDEGQLAGRIACEWVEYQSAMVDNGSFGPDRQPKIPALEEALTFLPEWVAVSKAADGLVEASAPFTVV.

The Cytoplasmic portion of the chain corresponds to Met-1–Gln-14. The helical transmembrane segment at Thr-15 to Val-35 threads the bilayer. At Ser-36–Lys-353 the chain is on the vacuolar side. Asn-107 carries an N-linked (GlcNAc...) asparagine glycan. Positions 152 and 164 each coordinate Zn(2+). Glu-196 serves as the catalytic Proton acceptor. Zn(2+) is bound at residue Glu-197. Residue Asn-213 is glycosylated (N-linked (GlcNAc...) asparagine). Glu-222 and His-311 together coordinate Zn(2+). The chain crosses the membrane as a helical span at residues Pro-354 to Leu-374. Residues Lys-375–Phe-448 are Cytoplasmic-facing. The disordered stretch occupies residues Gly-379–Ala-420. The segment covering Ser-406–Asp-419 has biased composition (polar residues). Residues Trp-449–Ile-469 form a helical membrane-spanning segment. At Asn-470–Tyr-479 the chain is on the vacuolar side. Residues Phe-480–Ala-500 form a helical membrane-spanning segment. At Phe-501–Thr-519 the chain is on the cytoplasmic side. Residues Ile-520 to Gly-540 form a helical membrane-spanning segment. Residues Lys-541 to Gln-543 are Vacuolar-facing. A helical membrane pass occupies residues Val-544–Gly-564. Residues Thr-565–Asp-644 lie on the Cytoplasmic side of the membrane. The segment at Asp-577–Lys-640 is disordered. Over residues Ser-588–Asp-606 the composition is skewed to low complexity. A helical transmembrane segment spans residues Gly-645–Val-665. Residues Gly-666–Ala-686 are Vacuolar-facing. An N-linked (GlcNAc...) asparagine glycan is attached at Asn-677. The chain crosses the membrane as a helical span at residues Trp-687 to Phe-707. Residues Ser-708–Arg-713 are Cytoplasmic-facing. A helical membrane pass occupies residues Gly-714–Phe-734. At Pro-735 to Val-1005 the chain is on the vacuolar side. Asn-761 and Asn-961 each carry an N-linked (GlcNAc...) asparagine glycan.

It belongs to the peptidase M28 family. It depends on Zn(2+) as a cofactor.

Its subcellular location is the vacuole membrane. Its function is as follows. May be involved in vacuolar sorting and osmoregulation. This Coprinopsis cinerea (strain Okayama-7 / 130 / ATCC MYA-4618 / FGSC 9003) (Inky cap fungus) protein is Vacuolar membrane protease.